Here is a 126-residue protein sequence, read N- to C-terminus: Fluoride-specific ion channel FluC (126 aa).

A run of 4 helical transmembrane segments spans residues 5-25 (IAVI…FALW), 34-54 (WGTL…LAVF), 67-87 (LVIT…GEVV), and 95-115 (FGLA…LTWA). Na(+) is bound by residues Gly-74 and Thr-77.

It belongs to the fluoride channel Fluc/FEX (TC 1.A.43) family.

The protein resides in the cell inner membrane. The enzyme catalyses fluoride(in) = fluoride(out). Na(+) is not transported, but it plays an essential structural role and its presence is essential for fluoride channel function. Functionally, fluoride-specific ion channel. Important for reducing fluoride concentration in the cell, thus reducing its toxicity. The protein is Fluoride-specific ion channel FluC of Paracidovorax citrulli (strain AAC00-1) (Acidovorax citrulli).